The chain runs to 296 residues: MAWVQLRLNSTNEKAEKISEYLEEIGAVSVTFMDSQDTPIFEPLPGETRLWGNTDVIALFDAETNMQQIVRLLQQKNHLDENTAYKIEQIEDKDWEREWMDNFHPMKFGKRLWICPSWREIPDENAINVMLDPGLAFGTGTHPTTALCLEWLDSLDLTGKTVIDFGCGSGILAIAALKLGAKSAVGIDIDPQAILASYNNAEQNGVAERLQLFLSEEKPTDLQADVVIANILAGPLKELYPIISNLVKPQGDLGLSGILSTQADSVCEAYQGKFTLDPITEREEWCRITGKLNSFV.

4 residues coordinate S-adenosyl-L-methionine: Thr145, Gly166, Asp188, and Asn230.

It belongs to the methyltransferase superfamily. PrmA family.

Its subcellular location is the cytoplasm. It carries out the reaction L-lysyl-[protein] + 3 S-adenosyl-L-methionine = N(6),N(6),N(6)-trimethyl-L-lysyl-[protein] + 3 S-adenosyl-L-homocysteine + 3 H(+). Methylates ribosomal protein L11. The protein is Ribosomal protein L11 methyltransferase of Histophilus somni (strain 129Pt) (Haemophilus somnus).